Reading from the N-terminus, the 498-residue chain is Probable malate:quinone oxidoreductase 2 (498 aa).

The protein belongs to the MQO family. FAD serves as cofactor.

It catalyses the reaction (S)-malate + a quinone = a quinol + oxaloacetate. It participates in carbohydrate metabolism; tricarboxylic acid cycle; oxaloacetate from (S)-malate (quinone route): step 1/1. The polypeptide is Probable malate:quinone oxidoreductase 2 (Staphylococcus epidermidis (strain ATCC 35984 / DSM 28319 / BCRC 17069 / CCUG 31568 / BM 3577 / RP62A)).